The following is a 530-amino-acid chain: uncharacterized protein (530 aa).

Residues 1-33 (MNNMSLKFPDIAINSSESSDDEDPSSKNEKKDG) form a disordered region. Positions 24–33 (PSSKNEKKDG) are enriched in basic and acidic residues. The next 12 membrane-spanning stretches (helical) occupy residues 83-103 (FFILPIMCITYGMQYLDKTAV), 124-144 (WLSTIFYLGYMIAQYPAGYLL), 147-167 (FPISYFMFIAAFLWSACVLLM), 181-201 (FFSGVFEGCVNPAFVALTAMW), 211-231 (VVSWYAFNGVAIMVGALLGYG), 244-264 (YPFLVIGAISTAWSFVYLFFP), 323-343 (VTNAMSVFSALIIQGIGYSGI), 346-366 (TLLTLPSGAFAVAGMIASGIF), 375-395 (IPLAMTTSSLTIVGSIMIWKI), 404-424 (VVGVWLFCTISSGNAVILSLL), 436-456 (TVNATMFLFYSIGNIVSPQLF), and 471-491 (SLVSVCLFEGVLALLAFYYIF).

Belongs to the major facilitator superfamily. Allantoate permease family.

It is found in the endoplasmic reticulum. It localises to the membrane. This is an uncharacterized protein from Schizosaccharomyces pombe (strain 972 / ATCC 24843) (Fission yeast).